Reading from the N-terminus, the 269-residue chain is Tryptophan synthase alpha chain (269 aa).

Active-site proton acceptor residues include Glu49 and Asp60.

This sequence belongs to the TrpA family. As to quaternary structure, tetramer of two alpha and two beta chains.

It carries out the reaction (1S,2R)-1-C-(indol-3-yl)glycerol 3-phosphate + L-serine = D-glyceraldehyde 3-phosphate + L-tryptophan + H2O. The protein operates within amino-acid biosynthesis; L-tryptophan biosynthesis; L-tryptophan from chorismate: step 5/5. In terms of biological role, the alpha subunit is responsible for the aldol cleavage of indoleglycerol phosphate to indole and glyceraldehyde 3-phosphate. This Pseudomonas putida (strain ATCC 700007 / DSM 6899 / JCM 31910 / BCRC 17059 / LMG 24140 / F1) protein is Tryptophan synthase alpha chain.